Here is a 957-residue protein sequence, read N- to C-terminus: MSNYIVEKIYNPKNIEEPIYKFWEYGDYFSPHGNTSQESYCIMMPPPNITGQLHLGHAFQQTIMDVLIRYQRMQGKNTLWQTGTDHAGIATQMLVEHKIYNNTGKTRHDYTRDELIKNIWAWKSQSEQFITYQMKRLGNSVDWKRQRFTMDTEMSYAVTEAFIRLYRKNLIYRGKRLVNWDCKLQTAISDLEVINKKTKGSIWYIYYKLDNATISSNSHHLIVATTRPETMLGDTAVAVHPEDTRYKNYIGQYVIAPITNRRIPIISDKNVDMFKGTGCLKITPAHDFNDYIIGKRHGLPMINIFSLNGKILKKLEVFNSSGQLTDQLYCKIPQIFHNLDSDNARKKIISECNALKLLHNIEPHDLTIPYSDRTGTIIEPMLTDQWYIRVKHLTQHAIDAVNLNIINFVPKQYKNMYFSWMNNLQDWCISRQIWWGHKIPAWYDDNNTIYVGYCEKDIRIKNKLNNNVILHREKDVLDTWFSSSLWTFAALGWPKNTNLLNVFHPTNIIISGFDIIFFWIARMIMLTMHFIKNDNGSAQIPFKTVYITGLIRDELGQKMSKSKGNIIDPIDIIDGISIENLLKKRTKNMLQPQLSKHIINNTIKQFPNGIKPHGTDALRFTLVALASSGRDIHWDMQRLTGYRNFCNKLWHASRFVLMHTKNQDCGISININEKSFSLADRWIITKFHQTVQIFHKKLEIYRFDEIANILHEFIWHQFCDWYLELTKPILYHGNALELRGTRYTLITLLESLLRLTHPIIPFITEKIWQEVKTVTGNNGTTIMLQPFPKYDESVIDMKSVIDIEWIKNAVLAIRTARVNMNISYNIPLQIVFRDTSSEVKKRITENSKILCHIAQLKSIHFISKGTIYPKSMTMPLDSSELLIRIPDTFNKENEINRLKKESELINRKIETIQKLLDDNNFINQAPKSVIKDKQALLNYYELIQNKLIDQCAIMKKL.

Positions 47-57 (PNITGQLHLGH) match the 'HIGH' region motif. Residues 558-562 (KMSKS) carry the 'KMSKS' region motif. Lys-561 is an ATP binding site. Positions 889 to 918 (FNKENEINRLKKESELINRKIETIQKLLDD) form a coiled coil.

Belongs to the class-I aminoacyl-tRNA synthetase family. ValS type 1 subfamily. As to quaternary structure, monomer.

It localises to the cytoplasm. It carries out the reaction tRNA(Val) + L-valine + ATP = L-valyl-tRNA(Val) + AMP + diphosphate. Catalyzes the attachment of valine to tRNA(Val). As ValRS can inadvertently accommodate and process structurally similar amino acids such as threonine, to avoid such errors, it has a 'posttransfer' editing activity that hydrolyzes mischarged Thr-tRNA(Val) in a tRNA-dependent manner. In Blochmanniella pennsylvanica (strain BPEN), this protein is Valine--tRNA ligase.